We begin with the raw amino-acid sequence, 348 residues long: UDP-3-O-acylglucosamine N-acyltransferase (348 aa).

His243 acts as the Proton acceptor in catalysis.

The protein belongs to the transferase hexapeptide repeat family. LpxD subfamily. As to quaternary structure, homotrimer.

The catalysed reaction is a UDP-3-O-[(3R)-3-hydroxyacyl]-alpha-D-glucosamine + a (3R)-hydroxyacyl-[ACP] = a UDP-2-N,3-O-bis[(3R)-3-hydroxyacyl]-alpha-D-glucosamine + holo-[ACP] + H(+). The protein operates within bacterial outer membrane biogenesis; LPS lipid A biosynthesis. Its function is as follows. Catalyzes the N-acylation of UDP-3-O-acylglucosamine using 3-hydroxyacyl-ACP as the acyl donor. Is involved in the biosynthesis of lipid A, a phosphorylated glycolipid that anchors the lipopolysaccharide to the outer membrane of the cell. This is UDP-3-O-acylglucosamine N-acyltransferase from Hahella chejuensis (strain KCTC 2396).